The following is a 510-amino-acid chain: NAD(P)H-quinone oxidoreductase subunit 2 B, chloroplastic (510 aa).

The next 13 helical transmembrane spans lie at 24–44, 57–77, 99–119, 124–144, 149–169, 183–203, 227–247, 295–315, 323–343, 354–374, 395–415, 418–438, and 484–504; these read LLLF…GLIL, IPWL…ALLF, IFQF…VEYI, MAIT…MFLC, LITI…LSGY, YLLM…WLYG, PGIS…LSLA, WHLL…LIAI, MLAY…IVGD, YMLF…LFGL, ALSL…AGFF, LHLF…IGLL, and MIVC…IIAI.

The protein belongs to the complex I subunit 2 family. As to quaternary structure, NDH is composed of at least 16 different subunits, 5 of which are encoded in the nucleus.

It is found in the plastid. Its subcellular location is the chloroplast thylakoid membrane. The enzyme catalyses a plastoquinone + NADH + (n+1) H(+)(in) = a plastoquinol + NAD(+) + n H(+)(out). It catalyses the reaction a plastoquinone + NADPH + (n+1) H(+)(in) = a plastoquinol + NADP(+) + n H(+)(out). Functionally, NDH shuttles electrons from NAD(P)H:plastoquinone, via FMN and iron-sulfur (Fe-S) centers, to quinones in the photosynthetic chain and possibly in a chloroplast respiratory chain. The immediate electron acceptor for the enzyme in this species is believed to be plastoquinone. Couples the redox reaction to proton translocation, and thus conserves the redox energy in a proton gradient. This Citrus sinensis (Sweet orange) protein is NAD(P)H-quinone oxidoreductase subunit 2 B, chloroplastic.